A 171-amino-acid polypeptide reads, in one-letter code: Large ribosomal subunit protein bL9 (171 aa).

The protein belongs to the bacterial ribosomal protein bL9 family.

In terms of biological role, binds to the 23S rRNA. This is Large ribosomal subunit protein bL9 from Rickettsia prowazekii (strain Madrid E).